Here is a 245-residue protein sequence, read N- to C-terminus: Brasilane terpene glycosides biosynthesis cluster protein D (245 aa).

2 C3H1-type zinc fingers span residues 121-152 and 161-185; these read KELKIICPWWLTDGYSCREHDQGKCPFYHDNV and ICHFWADGGRCTKSQKDCRFAHYPA. The tract at residues 186 to 245 is disordered; that stretch reads PHRVTAPMPSKKKSKKLRSSVADDASHPDLGKARRHDPRDDEQNDEVWRNQGRARPGQEW. Over residues 209–226 the composition is skewed to basic and acidic residues; sequence DASHPDLGKARRHDPRDD.

In terms of biological role, part of the gene cluster that mediates the biosynthesis of the brasilane terpene glycosides brasilane D and E. The biosynthesis starts with the activity of the terpene cyclase braA that converts farnesyl pyrophosphate into the sesquiterpene alcohol trichobrasilenol. Subsequently, trichobrasilenol is glycosylated by the O-glycosyltransferase braB putatively using UDP-GlcNAc as sugar donor to yield brasilane A. The latter then undergoes two rounds of oxidation performed by the cytochrome P450 monooxygenase braC. In the first round braC hydroxylates C-12 forming brasilane D, which serves as substrate in the second round to establish the epoxide at the bond between C-5 and C-10 and oxidize the alcohol at C-12 to an aldehyde leading to the final product brasilane E. The polypeptide is Brasilane terpene glycosides biosynthesis cluster protein D (Annulohypoxylon truncatum (Hypoxylon truncatum)).